We begin with the raw amino-acid sequence, 240 residues long: Glutathione S-transferase theta-1 (240 aa).

Positions 2–82 (GLELYLDLLS…YLTRKYKVPD (81 aa)) constitute a GST N-terminal domain. Glutathione is bound by residues His-40, 53–54 (KV), and 66–67 (ES). Positions 88-220 (DLQARARVDE…HEVILKAKDF (133 aa)) constitute a GST C-terminal domain.

Belongs to the GST superfamily. Theta family. In terms of assembly, homodimer. In terms of tissue distribution, found in erythrocyte. Expressed at low levels in liver. In lung, expressed at low levels in club cells and ciliated cells at the alveolar/bronchiolar junction. Absent from epithelial cells of larger bronchioles.

The protein resides in the cytoplasm. It catalyses the reaction RX + glutathione = an S-substituted glutathione + a halide anion + H(+). Functionally, conjugation of reduced glutathione to a wide number of exogenous and endogenous hydrophobic electrophiles. Acts on 1,2-epoxy-3-(4-nitrophenoxy)propane, phenethylisothiocyanate 4-nitrobenzyl chloride and 4-nitrophenethyl bromide. Displays glutathione peroxidase activity with cumene hydroperoxide. In Homo sapiens (Human), this protein is Glutathione S-transferase theta-1 (GSTT1).